We begin with the raw amino-acid sequence, 644 residues long: Exoribonuclease 2 (644 aa).

Positions 190–516 (REDLTALDFI…INHRLLKALI (327 aa)) constitute an RNB domain. Residues 562–644 (DSRFAAEIID…ENRSVIARPV (83 aa)) enclose the S1 motif domain.

It belongs to the RNR ribonuclease family. RNase II subfamily.

Its subcellular location is the cytoplasm. The catalysed reaction is Exonucleolytic cleavage in the 3'- to 5'-direction to yield nucleoside 5'-phosphates.. Involved in mRNA degradation. Hydrolyzes single-stranded polyribonucleotides processively in the 3' to 5' direction. The protein is Exoribonuclease 2 of Sodalis glossinidius (strain morsitans).